Consider the following 169-residue polypeptide: Small ribosomal subunit protein uS13c (169 aa).

The transit peptide at 1 to 47 (MAQMVAMPVAHSLSLICNWAKSNPLSRNTLALPASNTPNKQSLSIRC) directs the protein to the chloroplast.

Belongs to the universal ribosomal protein uS13 family. Part of the 30S ribosomal subunit.

The protein localises to the plastid. It is found in the chloroplast. In terms of biological role, located at the top of the head of the 30S subunit, it contacts several helices of the 16S rRNA. The protein is Small ribosomal subunit protein uS13c (RPS13) of Arabidopsis thaliana (Mouse-ear cress).